We begin with the raw amino-acid sequence, 459 residues long: Cysteine--tRNA ligase (459 aa).

Cys-28 contacts Zn(2+). A 'HIGH' region motif is present at residues 30–40 (VTIYDLCHIGH). Cys-209, His-234, and Glu-238 together coordinate Zn(2+). The 'KMSKS' region motif lies at 266 to 270 (KMSKS). Lys-269 serves as a coordination point for ATP.

Belongs to the class-I aminoacyl-tRNA synthetase family. Monomer. Zn(2+) serves as cofactor.

The protein resides in the cytoplasm. It catalyses the reaction tRNA(Cys) + L-cysteine + ATP = L-cysteinyl-tRNA(Cys) + AMP + diphosphate. The sequence is that of Cysteine--tRNA ligase from Shewanella loihica (strain ATCC BAA-1088 / PV-4).